Consider the following 1062-residue polypeptide: Carbamoyl phosphate synthase large chain (1062 aa).

The tract at residues 1-401 (MPKRKDIHKI…AMQKAVRSLE (401 aa)) is carboxyphosphate synthetic domain. ATP contacts are provided by Arg129, Arg169, Gly175, Gly176, Lys208, Ile210, Glu215, Gly241, Ile242, His243, Gln284, and Glu298. One can recognise an ATP-grasp 1 domain in the interval 133 to 327 (KNLCKELGEP…IAKMAAKIAV (195 aa)). 3 residues coordinate Mg(2+): Gln284, Glu298, and Asn300. Residues Gln284, Glu298, and Asn300 each contribute to the Mn(2+) site. Positions 402 to 546 (IDEKDLYSEE…YSTYDAENES (145 aa)) are oligomerization domain. A carbamoyl phosphate synthetic domain region spans residues 547–929 (HRSGKKSVIV…ALYKAFAGAK (383 aa)). In terms of domain architecture, ATP-grasp 2 spans 671–861 (DDIIKELKLN…MAQVATRVIM (191 aa)). Arg707, Asp746, Leu748, Glu752, Gly777, Val778, His779, Ser780, Gln820, and Glu832 together coordinate ATP. Mg(2+)-binding residues include Gln820, Glu832, and Asn834. Mn(2+) is bound by residues Gln820, Glu832, and Asn834. The MGS-like domain occupies 930 to 1062 (MQLPENGNVL…NRSFATDALQ (133 aa)). An allosteric domain region spans residues 930 to 1062 (MQLPENGNVL…NRSFATDALQ (133 aa)).

It belongs to the CarB family. In terms of assembly, composed of two chains; the small (or glutamine) chain promotes the hydrolysis of glutamine to ammonia, which is used by the large (or ammonia) chain to synthesize carbamoyl phosphate. Tetramer of heterodimers (alpha,beta)4. The cofactor is Mg(2+). Mn(2+) serves as cofactor.

It carries out the reaction hydrogencarbonate + L-glutamine + 2 ATP + H2O = carbamoyl phosphate + L-glutamate + 2 ADP + phosphate + 2 H(+). It catalyses the reaction hydrogencarbonate + NH4(+) + 2 ATP = carbamoyl phosphate + 2 ADP + phosphate + 2 H(+). It participates in amino-acid biosynthesis; L-arginine biosynthesis; carbamoyl phosphate from bicarbonate: step 1/1. Its pathway is pyrimidine metabolism; UMP biosynthesis via de novo pathway; (S)-dihydroorotate from bicarbonate: step 1/3. Large subunit of the glutamine-dependent carbamoyl phosphate synthetase (CPSase). CPSase catalyzes the formation of carbamoyl phosphate from the ammonia moiety of glutamine, carbonate, and phosphate donated by ATP, constituting the first step of 2 biosynthetic pathways, one leading to arginine and/or urea and the other to pyrimidine nucleotides. The large subunit (synthetase) binds the substrates ammonia (free or transferred from glutamine from the small subunit), hydrogencarbonate and ATP and carries out an ATP-coupled ligase reaction, activating hydrogencarbonate by forming carboxy phosphate which reacts with ammonia to form carbamoyl phosphate. In Lactobacillus acidophilus (strain ATCC 700396 / NCK56 / N2 / NCFM), this protein is Carbamoyl phosphate synthase large chain.